Consider the following 688-residue polypeptide: DNA-directed RNA polymerase subunit beta' (688 aa).

Zn(2+)-binding residues include C69, C71, C87, and C90. 3 residues coordinate Mg(2+): D497, D499, and D501.

This sequence belongs to the RNA polymerase beta' chain family. RpoC1 subfamily. As to quaternary structure, in plastids the minimal PEP RNA polymerase catalytic core is composed of four subunits: alpha, beta, beta', and beta''. When a (nuclear-encoded) sigma factor is associated with the core the holoenzyme is formed, which can initiate transcription. It depends on Mg(2+) as a cofactor. Zn(2+) is required as a cofactor.

It localises to the plastid. The protein resides in the chloroplast. It carries out the reaction RNA(n) + a ribonucleoside 5'-triphosphate = RNA(n+1) + diphosphate. Functionally, DNA-dependent RNA polymerase catalyzes the transcription of DNA into RNA using the four ribonucleoside triphosphates as substrates. The chain is DNA-directed RNA polymerase subunit beta' from Sinapis alba (White mustard).